The following is a 249-amino-acid chain: Uridylate kinase (249 aa).

ATP is bound at residue 21–24 (KLSG). Residue glycine 63 participates in UMP binding. ATP is bound by residues glycine 64 and arginine 68. UMP contacts are provided by residues aspartate 84 and 145–152 (TGNPFVTT). Residues threonine 172, tyrosine 178, and aspartate 181 each contribute to the ATP site.

Belongs to the UMP kinase family. As to quaternary structure, homohexamer.

The protein localises to the cytoplasm. The enzyme catalyses UMP + ATP = UDP + ADP. It participates in pyrimidine metabolism; CTP biosynthesis via de novo pathway; UDP from UMP (UMPK route): step 1/1. Inhibited by UTP. Its function is as follows. Catalyzes the reversible phosphorylation of UMP to UDP. This is Uridylate kinase from Francisella tularensis subsp. holarctica (strain FTNF002-00 / FTA).